The sequence spans 459 residues: UDP-N-acetylmuramoylalanine--D-glutamate ligase (459 aa).

An ATP-binding site is contributed by 120–126 (GSNGKTT).

This sequence belongs to the MurCDEF family.

The protein localises to the cytoplasm. It carries out the reaction UDP-N-acetyl-alpha-D-muramoyl-L-alanine + D-glutamate + ATP = UDP-N-acetyl-alpha-D-muramoyl-L-alanyl-D-glutamate + ADP + phosphate + H(+). It participates in cell wall biogenesis; peptidoglycan biosynthesis. Functionally, cell wall formation. Catalyzes the addition of glutamate to the nucleotide precursor UDP-N-acetylmuramoyl-L-alanine (UMA). In Lactobacillus helveticus (strain DPC 4571), this protein is UDP-N-acetylmuramoylalanine--D-glutamate ligase.